The following is a 795-amino-acid chain: Lon protease (795 aa).

Positions 7-213 (SQILVVRGQV…KIIQAGIEDL (207 aa)) constitute a Lon N-terminal domain. 379 to 386 (GPPGVGKS) provides a ligand contact to ATP. The region spanning 615-795 (VSLPGIVNGM…YSDIYNKLFS (181 aa)) is the Lon proteolytic domain. Catalysis depends on residues Ser702 and Lys745.

The protein belongs to the peptidase S16 family. In terms of assembly, homohexamer. Organized in a ring with a central cavity.

It is found in the cytoplasm. The catalysed reaction is Hydrolysis of proteins in presence of ATP.. ATP-dependent serine protease that mediates the selective degradation of mutant and abnormal proteins as well as certain short-lived regulatory proteins. Required for cellular homeostasis and for survival from DNA damage and developmental changes induced by stress. Degrades polypeptides processively to yield small peptide fragments that are 5 to 10 amino acids long. Binds to DNA in a double-stranded, site-specific manner. The protein is Lon protease of Mycoplasma genitalium (strain ATCC 33530 / DSM 19775 / NCTC 10195 / G37) (Mycoplasmoides genitalium).